The following is a 114-amino-acid chain: Lymphotactin (114 aa).

The first 21 residues, 1-21 (MRLLLLTFLGVCCLTPWVVEG), serve as a signal peptide directing secretion. Cysteines 32 and 69 form a disulfide. The disordered stretch occupies residues 92-114 (KNMAETVPTGAQRSTSTAITLTG). Polar residues predominate over residues 100–114 (TGAQRSTSTAITLTG).

Belongs to the intercrine gamma family. As to expression, expressed in activated CD8(+) T cells. In the thymus, expressed by medullary thymic epithelial cells.

The protein resides in the secreted. Chemotactic activity for lymphocytes but not for monocytes or neutrophils. In thymus, mediates medullary accumulation of thymic dendritic cells and contributes to regulatoy T cell development, playing a role in self-tolerance establishment. The protein is Lymphotactin (Xcl1) of Mus musculus (Mouse).